The chain runs to 1188 residues: Spermatogenesis-associated protein 31C1 (1188 aa).

Residues 23–43 (PWVLDIFLTLVFALGLFFLLL) form a helical membrane-spanning segment. Disordered stretches follow at residues 57-92 (PSPR…KNHS), 121-249 (LEKG…LLTP), 483-510 (PGTS…EAQT), 530-567 (TPQN…DSGS), 733-813 (MPER…PTVP), 934-1013 (NMGH…PSIS), 1121-1143 (QQAT…QQPL), and 1155-1188 (LRHP…HHHH). Composition is skewed to basic residues over residues 59-68 (PRKRKRHLVS) and 80-92 (RRGR…KNHS). The segment covering 138-154 (VGKRTPDGASRSSHEPM) has biased composition (basic and acidic residues). Residues 191–207 (SSLSASQPPEPSLLLER) are compositionally biased toward low complexity. Positions 210–241 (PEPPALFPHPPHTPDPLACSPPPPKGFTPPPL) are enriched in pro residues. Residues 495-510 (WQSSTSTGESSKEAQT) are compositionally biased toward polar residues. 2 stretches are compositionally biased toward polar residues: residues 783–800 (LKGS…SSRA) and 943–954 (PNCQGSCKSQSP). A compositionally biased stretch (basic and acidic residues) spans 960 to 976 (HKRENSRKPNLEKHEEM). Residues 1121–1130 (QQATLKNQSR) show a composition bias toward polar residues.

It belongs to the SPATA31 family.

Its subcellular location is the membrane. Functionally, may play a role in spermatogenesis. This Homo sapiens (Human) protein is Spermatogenesis-associated protein 31C1 (SPATA31C1).